We begin with the raw amino-acid sequence, 424 residues long: Glutamyl-tRNA(Gln) amidotransferase subunit D (424 aa).

The disordered stretch occupies residues 56–78 (GETANGSRNGGKGCKTNEEELPE). The region spanning 84 to 413 (PKIAILSTGG…EKAAGMLRED (330 aa)) is the Asparaginase/glutaminase domain. Catalysis depends on residues T94, T170, D171, and K247.

This sequence belongs to the asparaginase 1 family. GatD subfamily. In terms of assembly, heterodimer of GatD and GatE.

The catalysed reaction is L-glutamyl-tRNA(Gln) + L-glutamine + ATP + H2O = L-glutaminyl-tRNA(Gln) + L-glutamate + ADP + phosphate + H(+). Functionally, allows the formation of correctly charged Gln-tRNA(Gln) through the transamidation of misacylated Glu-tRNA(Gln) in organisms which lack glutaminyl-tRNA synthetase. The reaction takes place in the presence of glutamine and ATP through an activated gamma-phospho-Glu-tRNA(Gln). The GatDE system is specific for glutamate and does not act on aspartate. The chain is Glutamyl-tRNA(Gln) amidotransferase subunit D from Methanosarcina acetivorans (strain ATCC 35395 / DSM 2834 / JCM 12185 / C2A).